The sequence spans 530 residues: Na(+)/H(+) antiporter NhaB (530 aa).

A run of 13 helical transmembrane segments spans residues 13–33 (FLGK…IINP), 34–54 (FVFF…EFIF), 64–84 (PLQP…TSPA), 90–110 (LVAN…IYFM), 113–133 (LLLY…LLSL), 136–156 (CLMA…AVVI), 205–225 (LLMH…VGEP), 234–254 (AGWL…PVFM), 306–326 (ALIA…VGLI), 351–371 (EEAL…AVII), 378–400 (PIIS…IANG), 450–470 (ATPN…APLI), and 481–501 (ALPY…FMLL).

This sequence belongs to the NhaB Na(+)/H(+) (TC 2.A.34) antiporter family.

Its subcellular location is the cell inner membrane. It catalyses the reaction 2 Na(+)(in) + 3 H(+)(out) = 2 Na(+)(out) + 3 H(+)(in). In terms of biological role, na(+)/H(+) antiporter that extrudes sodium in exchange for external protons. The protein is Na(+)/H(+) antiporter NhaB of Photobacterium profundum (strain SS9).